A 120-amino-acid polypeptide reads, in one-letter code: Large ribosomal subunit protein uL18 (120 aa).

It belongs to the universal ribosomal protein uL18 family. Part of the 50S ribosomal subunit; part of the 5S rRNA/L5/L18/L25 subcomplex. Contacts the 5S and 23S rRNAs.

This is one of the proteins that bind and probably mediate the attachment of the 5S RNA into the large ribosomal subunit, where it forms part of the central protuberance. The sequence is that of Large ribosomal subunit protein uL18 from Picosynechococcus sp. (strain ATCC 27264 / PCC 7002 / PR-6) (Agmenellum quadruplicatum).